The chain runs to 698 residues: Serotransferrin (698 aa).

An N-terminal signal peptide occupies residues 1-19 (MRLAVGALLVCAVLGLCLA). Transferrin-like domains are found at residues 25–347 (VRWC…NLRE) and 361–683 (VKWC…NLRK). 2 cysteine pairs are disulfide-bonded: C28–C67 and C38–C58. The residue at position 42 (R42) is a Dimethylated arginine. S51 carries an O-linked (GalNAc...) serine glycan. 2 residues coordinate Fe(3+): D82 and Y114. Cystine bridges form between C137/C213, C156/C350, C177/C193, C180/C198, C190/C196, C246/C260, C358/C615, C364/C396, C374/C387, C421/C693, C437/C656, C469/C542, C493/C684, C503/C517, C514/C525, C582/C596, and C634/C639. Positions 139, 143, 145, and 146 each coordinate hydrogencarbonate. Y207 is a binding site for Fe(3+). Residue H268 coordinates Fe(3+). S389 is modified (phosphoserine; by FAM20C). Residue D411 coordinates Fe(3+). N-linked (GlcNAc...) (complex) asparagine glycosylation is present at N432. Y445 lines the Fe(3+) pocket. T471, R475, A477, and G478 together coordinate hydrogencarbonate. An N-linked (GlcNAc...) asparagine; atypical; partial glycan is attached at N491. Y536 contacts Fe(3+). Residue H604 participates in Fe(3+) binding. Residue N630 is glycosylated (N-linked (GlcNAc...) (complex) asparagine). Residue S685 is modified to Phosphoserine; by FAM20C.

Belongs to the transferrin family. As to quaternary structure, monomer. Part of a complex composed of SLC40A1/ferroportin, TF/transferrin and HEPH/hephaestin that transfers iron from cells to transferrin. (Microbial infection) Binds to Neisseria transferrin-binding protein A (tbpA or tbp1). Forms a large complex with TbpA and TbpB. In terms of assembly, (Microbial infection) Binds to Neisseria transferrin-binding protein B (tbpb or tbp2). As to expression, expressed by the liver and secreted in plasma.

The protein localises to the secreted. Its function is as follows. Transferrins are iron binding transport proteins which can bind two Fe(3+) ions in association with the binding of an anion, usually bicarbonate. It is responsible for the transport of iron from sites of absorption and heme degradation to those of storage and utilization. Serum transferrin may also have a further role in stimulating cell proliferation. In terms of biological role, (Microbial infection) Serves as an iron source for Neisseria species, which capture the protein and extract its iron for their own use. (Microbial infection) Serves as an iron source for parasite T.brucei (strain 427), which capture TF via its own transferrin receptor ESAG6:ESAG7 and extract its iron for its own use. The protein is Serotransferrin of Homo sapiens (Human).